The primary structure comprises 604 residues: Glutamine--fructose-6-phosphate aminotransferase [isomerizing] (604 aa).

The active-site Nucleophile; for GATase activity is the Cys-2. One can recognise a Glutamine amidotransferase type-2 domain in the interval 2–218 (CGIVGVVGNR…DKELVILTKD (217 aa)). SIS domains lie at 284–423 (IITS…ANGK) and 452–594 (VAEK…VDKP). Lys-599 acts as the For Fru-6P isomerization activity in catalysis.

As to quaternary structure, homodimer.

It is found in the cytoplasm. The catalysed reaction is D-fructose 6-phosphate + L-glutamine = D-glucosamine 6-phosphate + L-glutamate. In terms of biological role, catalyzes the first step in hexosamine metabolism, converting fructose-6P into glucosamine-6P using glutamine as a nitrogen source. The chain is Glutamine--fructose-6-phosphate aminotransferase [isomerizing] from Streptococcus pyogenes serotype M3 (strain ATCC BAA-595 / MGAS315).